The following is a 266-amino-acid chain: Serine/arginine-rich splicing factor 12 (266 aa).

The tract at residues 42–266 is disordered; that stretch reads ARPRRPRAPR…SRSYHHKNSW (225 aa). Over residues 43–62 the composition is skewed to basic residues; that stretch reads RPRRPRAPRPRLRLRGRPGR. Over residues 102 to 114 the composition is skewed to basic and acidic residues; that stretch reads KSKERHLCSPSDH. The span at 115–127 shows a compositional bias: basic residues; sequence RRSRSPSQRRSRS. A compositionally biased stretch (basic and acidic residues) spans 133-144; it reads GRDRRHSDSLKE. Residues 151–166 show a composition bias toward low complexity; sequence SYSQSKSRSKSLPRQS. Over residues 183–194 the composition is skewed to basic residues; it reads GRSRSKSLPKRS. Composition is skewed to polar residues over residues 202–212 and 235–244; these read SRSPQKQTGSG and AYTSSGSKTQ. Basic residues predominate over residues 245–266; sequence TTKHSHLRSHSRSRSYHHKNSW.

The protein belongs to the splicing factor SR family.

Its subcellular location is the nucleus. Functionally, splicing factor that seems to antagonize SR proteins in pre-mRNA splicing regulation. In Mus musculus (Mouse), this protein is Serine/arginine-rich splicing factor 12 (Srsf12).